Here is a 796-residue protein sequence, read N- to C-terminus: Peroxisome proliferator-activated receptor gamma coactivator 1-alpha (796 aa).

Residue Lys77 is modified to N6-acetyllysine. The interval 98–138 (PVDEDGLPSFDALTDGDVTTENEASPSSMPDGTPPPQEAEE) is disordered. A compositionally biased stretch (polar residues) spans 114-127 (DVTTENEASPSSMP). Positions 142-146 (LKKLL) match the LXXLL motif motif. The residue at position 144 (Lys144) is an N6-acetyllysine. Thr176 is subject to Phosphothreonine; by AMPK. Lys182 carries the N6-acetyllysine modification. Residues 211–275 (YLTTNDDPPH…NDPKGSPFEN (65 aa)) form a disordered region. Residues 217 to 235 (DPPHTKPTENRNSSRDKCT) show a composition bias toward basic and acidic residues. A compositionally biased stretch (polar residues) spans 242–258 (TQSQTQHLQAKPTTLSL). Lys252, Lys269, Lys276, and Lys319 each carry N6-acetyllysine. Disordered regions lie at residues 288-374 (GTAG…AKRP) and 398-452 (TSQE…RKQL). Residues 291 to 337 (GLTPPTTPPHKANQDNPFRASPKLKPSCKTVVPPPSKKARYSESSCT) are interaction with PPARG. The span at 332-344 (SESSCTQGSNSTK) shows a compositional bias: polar residues. Lys345 and Lys411 each carry N6-acetyllysine. Residues 348–796 (EQSELYAQLS…LKEAQRSLRR (449 aa)) are mediates interaction with RNF34. The segment covering 401 to 412 (ELHDSRQLENKD) has biased composition (basic and acidic residues). Polar residues-rich tracts occupy residues 413-428 (APSS…STDS) and 439-450 (VSRQVSPGSTRK). The residue at position 450 (Lys450) is an N6-acetyllysine. A Phosphoserine; by AMPK modification is found at Ser538. 3 disordered regions span residues 542–597 (FNSP…SSSR), 609–637 (HRTH…SYEE), and 648–667 (YRRE…ERQR). Residues 562–577 (QRMRSRSRSFSRHRSC) show a composition bias toward basic residues. The span at 578-597 (SRSPYSRSRSRSPGSRSSSR) shows a compositional bias: low complexity. One can recognise an RRM domain in the interval 675-751 (RVIYVGKIRP…TDFELYFCGR (77 aa)). Lys756 and Lys777 each carry N6-acetyllysine.

In terms of assembly, homooligomer. Interacts with MYBBP1A; inhibits MYBBP1A transcriptional activation. Interacts with PRDM16, LPIN1 and PML. Interacts (via LXXLL motif) with RORA and RORC (via AF-2 motif); activates RORA and RORC transcriptional activation. Interacts with LRPPRC. Interacts with FOXO1. Interacts with NR5A2. In terms of processing, phosphorylation by AMPK in skeletal muscle increases activation of its own promoter. Phosphorylated by CLK2. Heavily acetylated by KAT2A/GCN5 under conditions of high nutrients, leading to inactivation of PPARGC1A. Deacetylated by SIRT1 in low nutrients/high NAD conditions, leading to its activation. Post-translationally, ubiquitinated. Ubiquitination by RNF34 induces proteasomal degradation.

It localises to the nucleus. It is found in the PML body. In terms of biological role, transcriptional coactivator for steroid receptors and nuclear receptors. Greatly increases the transcriptional activity of PPARG and thyroid hormone receptor on the uncoupling protein promoter. Can regulate key mitochondrial genes that contribute to the program of adaptive thermogenesis. Plays an essential role in metabolic reprogramming in response to dietary availability through coordination of the expression of a wide array of genes involved in glucose and fatty acid metabolism. Acts as a key regulator of gluconeogenesis: stimulates hepatic gluconeogenesis by increasing the expression of gluconeogenic enzymes, and acting together with FOXO1 to promote the fasting gluconeogenic program. Induces the expression of PERM1 in the skeletal muscle in an ESRRA-dependent manner. Also involved in the integration of the circadian rhythms and energy metabolism. Required for oscillatory expression of clock genes, such as BMAL1 and NR1D1, through the coactivation of RORA and RORC, and metabolic genes, such as PDK4 and PEPCK. In Bos taurus (Bovine), this protein is Peroxisome proliferator-activated receptor gamma coactivator 1-alpha (PPARGC1A).